The following is a 607-amino-acid chain: Lipid-A-disaccharide synthase (607 aa).

The interval Met1–Phe224 is unknown. A lipid-A-disaccharide synthase region spans residues Ser225–Ser607.

In the C-terminal section; belongs to the LpxB family.

It catalyses the reaction a lipid X + a UDP-2-N,3-O-bis[(3R)-3-hydroxyacyl]-alpha-D-glucosamine = a lipid A disaccharide + UDP + H(+). Its pathway is bacterial outer membrane biogenesis; LPS lipid A biosynthesis. Condensation of UDP-2,3-diacylglucosamine and 2,3-diacylglucosamine-1-phosphate to form lipid A disaccharide, a precursor of lipid A, a phosphorylated glycolipid that anchors the lipopolysaccharide to the outer membrane of the cell. The polypeptide is Lipid-A-disaccharide synthase (lpxB) (Chlamydia trachomatis serovar A (strain ATCC VR-571B / DSM 19440 / HAR-13)).